A 180-amino-acid polypeptide reads, in one-letter code: MLPMVTGFMNYGQQTVRAARYIGQSFMITLSHANRLPVTIQYPYEKLITSERFRGRIHFEFDKCIACEVCVRVCPIDLPVVNWRLETDIRKKRLLNYSIDFGICIFCGNCVEYCPTNCLSMTEEYELSTYDRHELNYNQIALGRLPISVIGDYTIRTIMNSTQIKIATGKPLDSKTITNY.

4Fe-4S ferredoxin-type domains lie at 55-84 (GRIHFEFDKCIACEVCVRVCPIDLPVVNWR) and 95-124 (LNYSIDFGICIFCGNCVEYCPTNCLSMTEE). Cys64, Cys67, Cys70, Cys74, Cys104, Cys107, Cys110, and Cys114 together coordinate [4Fe-4S] cluster.

It belongs to the complex I 23 kDa subunit family. In terms of assembly, NDH is composed of at least 16 different subunits, 5 of which are encoded in the nucleus. [4Fe-4S] cluster is required as a cofactor.

It is found in the plastid. The protein resides in the chloroplast thylakoid membrane. It catalyses the reaction a plastoquinone + NADH + (n+1) H(+)(in) = a plastoquinol + NAD(+) + n H(+)(out). It carries out the reaction a plastoquinone + NADPH + (n+1) H(+)(in) = a plastoquinol + NADP(+) + n H(+)(out). NDH shuttles electrons from NAD(P)H:plastoquinone, via FMN and iron-sulfur (Fe-S) centers, to quinones in the photosynthetic chain and possibly in a chloroplast respiratory chain. The immediate electron acceptor for the enzyme in this species is believed to be plastoquinone. Couples the redox reaction to proton translocation, and thus conserves the redox energy in a proton gradient. This is NAD(P)H-quinone oxidoreductase subunit I, chloroplastic from Platanus occidentalis (Sycamore).